The chain runs to 263 residues: Ribonuclease 3 (263 aa).

The interval 1–23 is disordered; it reads MPHSKNQRKHRHHSHSERRRQPK. The RNase III domain maps to 35–164; the sequence is FDELLRTLNL…FVGALYLDQG (130 aa). E77 is a Mg(2+) binding site. The active site involves D81. Positions 150 and 153 each coordinate Mg(2+). Residue E153 is part of the active site. One can recognise a DRBM domain in the interval 190-259; sequence DFKSQLQEFI…AQQALITLSQ (70 aa).

Belongs to the ribonuclease III family. In terms of assembly, homodimer. Mg(2+) serves as cofactor.

The protein resides in the cytoplasm. The enzyme catalyses Endonucleolytic cleavage to 5'-phosphomonoester.. Digests double-stranded RNA. Involved in the processing of primary rRNA transcript to yield the immediate precursors to the large and small rRNAs (23S and 16S). Processes some mRNAs, and tRNAs when they are encoded in the rRNA operon. Processes pre-crRNA and tracrRNA of type II CRISPR loci if present in the organism. The sequence is that of Ribonuclease 3 from Halalkalibacterium halodurans (strain ATCC BAA-125 / DSM 18197 / FERM 7344 / JCM 9153 / C-125) (Bacillus halodurans).